The following is a 125-amino-acid chain: MATVNQLVRKGRTKRTAKSSVPALEACPQKRGVCTRVYTTTPKKPNSALRKVARVRLTNSYEVASYIGGEGHNLQEHSVVLIRGGRVKDLPGVRYHVVRGAADTAGVDKRRQGRSKYGAKRPKKK.

Residues 1 to 23 are disordered; it reads MATVNQLVRKGRTKRTAKSSVPA. 3-methylthioaspartic acid is present on Asp89. The disordered stretch occupies residues 102–125; it reads ADTAGVDKRRQGRSKYGAKRPKKK. Residues 111-125 show a composition bias toward basic residues; it reads RQGRSKYGAKRPKKK.

Belongs to the universal ribosomal protein uS12 family. Part of the 30S ribosomal subunit. Contacts proteins S8 and S17. May interact with IF1 in the 30S initiation complex.

In terms of biological role, with S4 and S5 plays an important role in translational accuracy. Functionally, interacts with and stabilizes bases of the 16S rRNA that are involved in tRNA selection in the A site and with the mRNA backbone. Located at the interface of the 30S and 50S subunits, it traverses the body of the 30S subunit contacting proteins on the other side and probably holding the rRNA structure together. The combined cluster of proteins S8, S12 and S17 appears to hold together the shoulder and platform of the 30S subunit. This Halorhodospira halophila (strain DSM 244 / SL1) (Ectothiorhodospira halophila (strain DSM 244 / SL1)) protein is Small ribosomal subunit protein uS12.